Consider the following 359-residue polypeptide: E3 ubiquitin-protein ligase RNF146 (359 aa).

Residues 36 to 74 form an RING-type zinc finger; that stretch reads CAICLQTCVHPVSLPCKHVFCYLCVKGASWLGKRCALCR. Glycyl lysine isopeptide (Lys-Gly) (interchain with G-Cter in ubiquitin) cross-links involve residues lysine 84 and lysine 94. The region spanning 91 to 167 is the WWE domain; that stretch reads EELKAASRGN…EHGRRRKIKR (77 aa). A glycoprotein-binding residues include tyrosine 107, arginine 110, and tryptophan 114. Lysine 130 is covalently cross-linked (Glycyl lysine isopeptide (Lys-Gly) (interchain with G-Cter in ubiquitin)). A glycoprotein contacts are provided by tyrosine 144, glutamine 153, arginine 163, and lysine 175. Lysine 175 is covalently cross-linked (Glycyl lysine isopeptide (Lys-Gly) (interchain with G-Cter in ubiquitin)). Residues 259–359 are disordered; that stretch reads ERSHRGEGEE…PDGQCTVTEV (101 aa). Positions 284–298 are enriched in acidic residues; that stretch reads SVEETESDASSDSED. 2 positions are modified to phosphoserine: serine 290 and serine 294. Positions 306-322 are enriched in polar residues; that stretch reads HSLTQQRLLVPNANQTV.

In terms of assembly, can form homooligomers. Interacts with PARsylated AXIN1, AXIN2, BLZF1, CASC3, H1-2, IPO7, LIG3, NCL, PARP1, XRCC1, XRCC5 and XRCC6. Interacts with DDB1, DHX15, IQGAP1, LRPPRC, PARP2, PRKDC, RUVBL2, TNKS1 and TNKS2. Binding often leads to interactor ubiquitination, in the presence of the appropriate E1 and E2 enzymes, and proteasomal degradation. In terms of processing, ubiquitinated; autoubiquitinated. Autoubiquitination is enhanced upon poly(ADP-ribose)-binding.

It is found in the cytoplasm. The protein localises to the cytosol. Its subcellular location is the nucleus. It catalyses the reaction S-ubiquitinyl-[E2 ubiquitin-conjugating enzyme]-L-cysteine + [acceptor protein]-L-lysine = [E2 ubiquitin-conjugating enzyme]-L-cysteine + N(6)-ubiquitinyl-[acceptor protein]-L-lysine.. The protein operates within protein modification; protein ubiquitination. Its function is as follows. E3 ubiquitin-protein ligase that specifically binds poly-ADP-ribosylated (PARsylated) proteins and mediates their ubiquitination and subsequent degradation. May regulate many important biological processes, such as cell survival and DNA damage response. Acts as an activator of the Wnt signaling pathway by mediating the ubiquitination of PARsylated AXIN1 and AXIN2, 2 key components of the beta-catenin destruction complex. Acts in cooperation with tankyrase proteins (TNKS and TNKS2), which mediate PARsylation of target proteins AXIN1, AXIN2, BLZF1, CASC3, TNKS and TNKS2. Recognizes and binds tankyrase-dependent PARsylated proteins via its WWE domain and mediates their ubiquitination, leading to their degradation. Different ubiquitin linkage types have been observed: TNKS2 undergoes ubiquitination at 'Lys-48' and 'Lys-63', while AXIN1 is only ubiquitinated at 'Lys-48'. May regulate TNKS and TNKS2 subcellular location, preventing aggregation at a centrosomal location. Neuroprotective protein. Protects the brain against N-methyl-D-aspartate (NMDA) receptor-mediated glutamate excitotoxicity and ischemia, by interfering with PAR-induced cell death, called parthanatos. Prevents nuclear translocation of AIFM1 in a PAR-binding dependent manner. Does not affect PARP1 activation. Protects against cell death induced by DNA damaging agents, such as N-methyl-N-nitro-N-nitrosoguanidine (MNNG) and rescues cells from G1 arrest. Promotes cell survival after gamma-irradiation. Facilitates DNA repair. The polypeptide is E3 ubiquitin-protein ligase RNF146 (RNF146) (Ailuropoda melanoleuca (Giant panda)).